The chain runs to 695 residues: Frizzled and smoothened-like protein O (695 aa).

Positions methionine 1 to serine 23 are cleaved as a signal peptide. Topologically, residues glutamine 24–glutamate 233 are extracellular. The 146-residue stretch at aspartate 28–proline 173 folds into the FZ domain. 5 disulfides stabilise this stretch: cysteine 33/cysteine 96, cysteine 42/cysteine 89, cysteine 80/cysteine 125, cysteine 114/cysteine 170, and cysteine 118/cysteine 138. N-linked (GlcNAc...) asparagine glycosylation occurs at asparagine 47. N-linked (GlcNAc...) asparagine glycosylation is found at asparagine 137 and asparagine 178. A helical membrane pass occupies residues alanine 234 to phenylalanine 254. The Cytoplasmic segment spans residues proline 255–asparagine 262. A helical transmembrane segment spans residues tryptophan 263 to glutamate 283. The Extracellular portion of the chain corresponds to alanine 284 to threonine 307. Residues cysteine 308–leucine 328 traverse the membrane as a helical segment. The Cytoplasmic segment spans residues tyrosine 329 to lysine 343. The helical transmembrane segment at tyrosine 344–isoleucine 364 threads the bilayer. The Extracellular segment spans residues lysine 365–glutamine 387. Residues tyrosine 388–threonine 408 form a helical membrane-spanning segment. The Cytoplasmic segment spans residues serine 409–serine 435. Residues isoleucine 436–valine 456 form a helical membrane-spanning segment. Over threonine 457–alanine 500 the chain is Extracellular. A helical transmembrane segment spans residues isoleucine 501 to leucine 521. At glutamine 522 to valine 695 the chain is on the cytoplasmic side. The segment covering serine 545–aspartate 556 has biased composition (polar residues). Residues serine 545 to valine 695 are disordered. A compositionally biased stretch (low complexity) spans asparagine 593–serine 608. A compositionally biased stretch (polar residues) spans threonine 609 to serine 625. Over residues asparagine 626–asparagine 686 the composition is skewed to low complexity. Residues asparagine 653 to asparagine 691 adopt a coiled-coil conformation.

Belongs to the G-protein coupled receptor Fz/Smo family.

The protein resides in the membrane. The polypeptide is Frizzled and smoothened-like protein O (fslO) (Dictyostelium discoideum (Social amoeba)).